A 64-amino-acid chain; its full sequence is Large ribosomal subunit protein uL30 (64 aa).

Belongs to the universal ribosomal protein uL30 family. As to quaternary structure, part of the 50S ribosomal subunit.

The chain is Large ribosomal subunit protein uL30 from Bradyrhizobium diazoefficiens (strain JCM 10833 / BCRC 13528 / IAM 13628 / NBRC 14792 / USDA 110).